The primary structure comprises 448 residues: Trigger factor (448 aa).

The PPIase FKBP-type domain occupies 163-248; sequence GDIVVIDFDG…VKDIRVPKAA (86 aa).

The protein belongs to the FKBP-type PPIase family. Tig subfamily.

Its subcellular location is the cytoplasm. It catalyses the reaction [protein]-peptidylproline (omega=180) = [protein]-peptidylproline (omega=0). In terms of biological role, involved in protein export. Acts as a chaperone by maintaining the newly synthesized protein in an open conformation. Functions as a peptidyl-prolyl cis-trans isomerase. In Rhodospirillum centenum (strain ATCC 51521 / SW), this protein is Trigger factor.